The sequence spans 297 residues: SWIRM domain-containing protein laf1 (297 aa).

2 disordered regions span residues 50 to 70 (PKCSTIPESPKDSIVEPKPTA) and 109 to 173 (STPA…EFSS). The segment covering 159–173 (QHNTRFKQSSREFSS) has biased composition (polar residues). Residues 207–297 (LRSEWKGPPL…AFHDEGFFDD (91 aa)) form the SWIRM domain.

Component of the RPD3C(L) complex.

It localises to the nucleus. In terms of biological role, component of the RPD3C(L) histone deacetylase complex (HDAC) responsible for the deacetylation of lysine residues on the N-terminal part of the core histones (H2A, H2B, H3 and H4). Histone deacetylation gives a tag for epigenetic repression and plays an important role in transcriptional regulation, cell cycle progression and developmental events. This chain is SWIRM domain-containing protein laf1 (laf1), found in Schizosaccharomyces pombe (strain 972 / ATCC 24843) (Fission yeast).